A 175-amino-acid chain; its full sequence is Adenine phosphoribosyltransferase (175 aa).

The protein belongs to the purine/pyrimidine phosphoribosyltransferase family. Homodimer.

It is found in the cytoplasm. It carries out the reaction AMP + diphosphate = 5-phospho-alpha-D-ribose 1-diphosphate + adenine. It participates in purine metabolism; AMP biosynthesis via salvage pathway; AMP from adenine: step 1/1. In terms of biological role, catalyzes a salvage reaction resulting in the formation of AMP, that is energically less costly than de novo synthesis. In Pelagibacter ubique (strain HTCC1062), this protein is Adenine phosphoribosyltransferase.